The chain runs to 200 residues: Translation machinery-associated protein 22 (200 aa).

Residues 95-166 (VVIRREARTK…EVEAYIHSLL (72 aa)) form the SUI1 domain.

This sequence belongs to the DENR family. Interacts with the 40S ribosomal subunit.

The protein resides in the cytoplasm. This Kluyveromyces lactis (strain ATCC 8585 / CBS 2359 / DSM 70799 / NBRC 1267 / NRRL Y-1140 / WM37) (Yeast) protein is Translation machinery-associated protein 22 (TMA22).